Here is a 72-residue protein sequence, read N- to C-terminus: Translation initiation factor IF-1 (72 aa).

Residues 1–72 (MAKQSAIEQD…SKGRIVFRYK (72 aa)) enclose the S1-like domain.

It belongs to the IF-1 family. Component of the 30S ribosomal translation pre-initiation complex which assembles on the 30S ribosome in the order IF-2 and IF-3, IF-1 and N-formylmethionyl-tRNA(fMet); mRNA recruitment can occur at any time during PIC assembly.

It is found in the cytoplasm. Its function is as follows. One of the essential components for the initiation of protein synthesis. Stabilizes the binding of IF-2 and IF-3 on the 30S subunit to which N-formylmethionyl-tRNA(fMet) subsequently binds. Helps modulate mRNA selection, yielding the 30S pre-initiation complex (PIC). Upon addition of the 50S ribosomal subunit IF-1, IF-2 and IF-3 are released leaving the mature 70S translation initiation complex. In Bacteroides fragilis (strain ATCC 25285 / DSM 2151 / CCUG 4856 / JCM 11019 / LMG 10263 / NCTC 9343 / Onslow / VPI 2553 / EN-2), this protein is Translation initiation factor IF-1.